A 593-amino-acid polypeptide reads, in one-letter code: Efflux pump FUBT (593 aa).

The segment at Met1–Val44 is disordered. A compositionally biased stretch (polar residues) spans Ser9 to Glu30. Asn19 carries an N-linked (GlcNAc...) asparagine glycan. Transmembrane regions (helical) follow at residues Trp98 to Tyr118, Val135 to Ala155, Phe167 to Ile187, Phe195 to Met215, Met227 to Gly247, Trp254 to Ile274, Ile337 to Phe357, Ile367 to Ala387, Leu410 to Thr430, Ile438 to Leu458, Ile468 to Phe488, and Trp503 to Tyr523. The interval Thr570–Val593 is disordered.

Belongs to the major facilitator superfamily. DHA1 family. Polyamines/proton antiporter (TC 2.A.1.2.16) subfamily.

The protein localises to the cell membrane. Its function is as follows. Efflux pump involved in export of fusaric acid, a mycotoxin with low to moderate toxicity to animals and humans, but with high phytotoxic properties. Constitutes a self-protecting mechanism of the fungus against critical levels of FSA within the cell. The sequence is that of Efflux pump FUBT from Fusarium oxysporum (Fusarium vascular wilt).